Here is a 150-residue protein sequence, read N- to C-terminus: Small ribosomal subunit protein eS19 (150 aa).

The protein belongs to the eukaryotic ribosomal protein eS19 family. Part of the 30S ribosomal subunit.

Functionally, may be involved in maturation of the 30S ribosomal subunit. This Thermoplasma volcanium (strain ATCC 51530 / DSM 4299 / JCM 9571 / NBRC 15438 / GSS1) protein is Small ribosomal subunit protein eS19.